Consider the following 208-residue polypeptide: Large ribosomal subunit protein uL3 (208 aa).

The disordered stretch occupies residues 123–146 (RHGQSRGPMAHGSRYHRRPGSMGP).

The protein belongs to the universal ribosomal protein uL3 family. Part of the 50S ribosomal subunit. Forms a cluster with proteins L14 and L19.

Its function is as follows. One of the primary rRNA binding proteins, it binds directly near the 3'-end of the 23S rRNA, where it nucleates assembly of the 50S subunit. This Streptococcus thermophilus (strain CNRZ 1066) protein is Large ribosomal subunit protein uL3.